The sequence spans 336 residues: Holliday junction branch migration complex subunit RuvB (336 aa).

A large ATPase domain (RuvB-L) region spans residues 4–184 (ADRLVAPGSI…FGIVQRLEFY (181 aa)). ATP-binding positions include isoleucine 23, arginine 24, glycine 65, lysine 68, threonine 69, threonine 70, 131–133 (EDY), arginine 174, tyrosine 184, and arginine 221. Position 69 (threonine 69) interacts with Mg(2+). The interval 185-255 (QVADLQHIVS…VASQALDMLN (71 aa)) is small ATPAse domain (RuvB-S). A head domain (RuvB-H) region spans residues 258–336 (AEGFDYMDRK…HFGITPPQMP (79 aa)). Arginine 294, arginine 313, and arginine 318 together coordinate DNA.

Belongs to the RuvB family. As to quaternary structure, homohexamer. Forms an RuvA(8)-RuvB(12)-Holliday junction (HJ) complex. HJ DNA is sandwiched between 2 RuvA tetramers; dsDNA enters through RuvA and exits via RuvB. An RuvB hexamer assembles on each DNA strand where it exits the tetramer. Each RuvB hexamer is contacted by two RuvA subunits (via domain III) on 2 adjacent RuvB subunits; this complex drives branch migration. In the full resolvosome a probable DNA-RuvA(4)-RuvB(12)-RuvC(2) complex forms which resolves the HJ.

The protein resides in the cytoplasm. It catalyses the reaction ATP + H2O = ADP + phosphate + H(+). In terms of biological role, the RuvA-RuvB-RuvC complex processes Holliday junction (HJ) DNA during genetic recombination and DNA repair, while the RuvA-RuvB complex plays an important role in the rescue of blocked DNA replication forks via replication fork reversal (RFR). RuvA specifically binds to HJ cruciform DNA, conferring on it an open structure. The RuvB hexamer acts as an ATP-dependent pump, pulling dsDNA into and through the RuvAB complex. RuvB forms 2 homohexamers on either side of HJ DNA bound by 1 or 2 RuvA tetramers; 4 subunits per hexamer contact DNA at a time. Coordinated motions by a converter formed by DNA-disengaged RuvB subunits stimulates ATP hydrolysis and nucleotide exchange. Immobilization of the converter enables RuvB to convert the ATP-contained energy into a lever motion, pulling 2 nucleotides of DNA out of the RuvA tetramer per ATP hydrolyzed, thus driving DNA branch migration. The RuvB motors rotate together with the DNA substrate, which together with the progressing nucleotide cycle form the mechanistic basis for DNA recombination by continuous HJ branch migration. Branch migration allows RuvC to scan DNA until it finds its consensus sequence, where it cleaves and resolves cruciform DNA. This chain is Holliday junction branch migration complex subunit RuvB, found in Cronobacter sakazakii (strain ATCC BAA-894) (Enterobacter sakazakii).